The primary structure comprises 1040 residues: Nucleotide-binding oligomerization domain-containing protein 2 (1040 aa).

CARD domains are found at residues 26 to 122 (CEMC…LHGC) and 126 to 218 (HSLH…EAAT). The short motif at 63 to 77 (WEVLSWEDYEGFHLL) is the ATG16L1-binding motif element. 9 residues coordinate ADP: T239, Y252, T253, G302, S303, G304, K305, S306, and T307. A required for CARD9 binding region spans residues 241-274 (DGAETLCLEDIYTENVLEVWADVGMAGPPQKSPA). The NACHT domain occupies 293–618 (DTVLVVGEAG…FFAAFYLALS (326 aa)). Residue 299 to 306 (GEAGSGKS) coordinates ATP. C395 carries S-palmitoyl cysteine lipidation. H603 lines the ADP pocket. LRR repeat units follow at residues 791-812 (RPVA…QLLP), 816-839 (VCKA…IECA), 844-865 (QLQK…SMAK), 872-884 (NFLA…NYIT), 900-920 (SLQF…QALA), 928-949 (SLRW…ALAL), 956-976 (MLEE…CSLA), 984-1005 (SLKI…ALLQ), and 1012-1032 (TILE…DKLG). C1033 carries the S-palmitoyl cysteine lipid modification.

This sequence belongs to the NOD1-NOD2 family. In terms of assembly, homooligomer: homooligomerizes following muramyl dipeptide (MDP)-binding, promoting RIPK2 recruitment. Interacts (via CARD domain) with RIPK2 (via CARD domain). Following RIPK2 recruitment, RIPK2 homooligomerizes via its CARD domain and forms long filaments named RIPosomes. Interacts (via CARD domain) with ubiquitin; inhibiting interaction with RIPK2. Component of a signaling complex consisting of ARHGEF2, NOD2 and RIPK2. Interacts with ANKRD17 (via N-terminus). Interacts with HSPA1A; the interaction enhances NOD2 stability. Interacts (via both CARD domains) with HSP90; the interaction enhances NOD2 stability. Interacts (via CARD domain) with SOCS3; the interaction promotes NOD2 degradation. Interacts (via CARD domain) with ERBIN; the interaction inhibits activation of NOD2. Interacts with MAPKBP1; the interaction is enhanced in the presence of muramyl dipeptide (MDP) and inhibits NOD2 homooligomerization and activation. Interacts with INAVA; the interaction takes place upon Pattern recognition receptor (PRR) stimulation. Interacts (via NACHT domain) with CARD9. Interacts (via CARD domain) with CASP1; this interaction leads to IL1B processing. Also interacts with CASP4. Interacts with NLRP1; this interaction is enhanced in the presence of muramyl dipeptide (MDP) and leads to increased IL1B release. Interacts with NLRP12; this interaction promotes degradation of NOD2 through the ubiquitin-proteasome pathway. Interacts with ANKHD1, C10orf67, CHMP5, DOCK7, ENTR1, KRT15, LDOC1, PPP1R12C, PPP2R3B, TRIM41 and VIM. Interacts with MAVS; interaction takes place following single-stranded RNA (ssRNA)-binding. Interacts with ATG16L1. Interacts with IRGM; promoting IRGM 'Lys-63'-linked polyubiquitination, which is required for interactions with the core autophagy factors. Post-translationally, palmitoylated by ZDHHC5; palmitoylation is required for proper recruitment to the bacterial entry site and hence for proper signaling upon cognate peptidoglycan detection. Palmitoylation promotes localization to the cell membrane. Palmitoylation protects from SQSTM1/p62-dependent autophagic degradation. Polyubiquitinated by TRIM27, leading to proteasome-mediated degradation. Polyubiquitinated and degraded following muramyl dipeptide (MDP) stimulation, conferring MDP tolerance and preventing septic shock. In terms of processing, degraded via selective autophagy following interaction with IRGM. IRGM promotes NOD2-RIPK2 RIPosome recruitment to autophagosome membranes, promoting their SQSTM1/p62-dependent autophagic degradation. Post-translationally, O-glycosylated by OGT, O-GlcNAcylation increases protein stability. Expressed in monocytes, macrophages, dendritic cells, hepatocytes, preadipocytes, epithelial cells of oral cavity, lung and intestine, with higher expression in ileal Paneth cells and in intestinal stem cells. As to expression, expressed at higher level in leukocytes.

It localises to the cell membrane. Its subcellular location is the basolateral cell membrane. The protein localises to the cytoplasm. It is found in the mitochondrion. With respect to regulation, ADP-binding promotes an inactive closed conformation. Its function is as follows. Pattern recognition receptor (PRR) that detects bacterial peptidoglycan fragments and other danger signals and plays an important role in gastrointestinal immunity. Specifically activated by muramyl dipeptide (MDP), a fragment of bacterial peptidoglycan found in every bacterial peptidoglycan type. NOD2 specifically recognizes and binds 6-O-phospho-MDP, the phosphorylated form of MDP, which is generated by NAGK. 6-O-phospho-MDP-binding triggers oligomerization that facilitates the binding and subsequent activation of the proximal adapter receptor-interacting RIPK2. Following recruitment, RIPK2 undergoes 'Met-1'- (linear) and 'Lys-63'-linked polyubiquitination by E3 ubiquitin-protein ligases XIAP, BIRC2, BIRC3 and the LUBAC complex, becoming a scaffolding protein for downstream effectors, triggering activation of the NF-kappa-B and MAP kinases signaling. This in turn leads to the transcriptional activation of hundreds of genes involved in immune response. Its ability to detect bacterial MDP plays a central role in maintaining the equilibrium between intestinal microbiota and host immune responses to control inflammation. An imbalance in this relationship results in dysbiosis, whereby pathogenic bacteria prevail on commensals, causing damage in the intestinal epithelial barrier as well as allowing bacterial invasion and inflammation. Acts as a regulator of appetite by sensing MDP in a subset of brain neurons: microbiota-derived MDP reach the brain, where they bind and activate NOD2 in inhibitory hypothalamic neurons, decreasing neuronal activity, thereby regulating satiety and body temperature. NOD2-dependent MDP-sensing of bacterial cell walls in the intestinal epithelial compartment contributes to sustained postnatal growth upon undernutrition. Also plays a role in antiviral response by acting as a sensor of single-stranded RNA (ssRNA) from viruses: upon ssRNA-binding, interacts with MAVS, leading to activation of interferon regulatory factor-3/IRF3 and expression of type I interferon. Also acts as a regulator of autophagy in dendritic cells via its interaction with ATG16L1, possibly by recruiting ATG16L1 at the site of bacterial entry. NOD2 activation in the small intestine crypt also contributes to intestinal stem cells survival and function: acts by promoting mitophagy via its association with ATG16L1. In addition to its main role in innate immunity, also regulates the adaptive immune system by acting as regulator of helper T-cell and regulatory T-cells (Tregs). Besides recognizing pathogens, also involved in the endoplasmic reticulum stress response: acts by sensing and binding to the cytosolic metabolite sphingosine-1-phosphate generated in response to endoplasmic reticulum stress, initiating an inflammation process that leads to activation of the NF-kappa-B and MAP kinases signaling. May also be involved in NLRP1 activation following activation by MDP, leading to CASP1 activation and IL1B release in macrophages. Functionally, acts as a pattern recognition receptor (PRR); able to activate NF-kappa-B. Can activate NF-kappa-B in a muramyl dipeptide (MDP)-independent manner. The protein is Nucleotide-binding oligomerization domain-containing protein 2 of Homo sapiens (Human).